Reading from the N-terminus, the 450-residue chain is Probable cysteine desulfurase, mitochondrial (450 aa).

The transit peptide at 1–52 (MNRSILKFVKNGIISSSSRINNNGFINKNNNNRWFATLPQPNRGIAGEKQPI) directs the protein to the mitochondrion. Pyridoxal 5'-phosphate is bound by residues 120–121 (AT), N200, Q228, and 248–250 (SGH). N6-(pyridoxal phosphate)lysine is present on K251. T288 contributes to the pyridoxal 5'-phosphate binding site. The active-site Cysteine persulfide intermediate is the C374. Residue C374 participates in [2Fe-2S] cluster binding.

The protein belongs to the class-V pyridoxal-phosphate-dependent aminotransferase family. NifS/IscS subfamily. It depends on pyridoxal 5'-phosphate as a cofactor.

The protein localises to the mitochondrion. The protein resides in the nucleus. It carries out the reaction (sulfur carrier)-H + L-cysteine = (sulfur carrier)-SH + L-alanine. Its function is as follows. Catalyzes the removal of elemental sulfur from cysteine to produce alanine. It supplies the inorganic sulfur for iron-sulfur (Fe-S) clusters. This chain is Probable cysteine desulfurase, mitochondrial (nfs1), found in Dictyostelium discoideum (Social amoeba).